Here is a 383-residue protein sequence, read N- to C-terminus: Protein delta homolog 2 (383 aa).

A signal peptide spans 1–26 (MPSGCRCLHLVCLLCILGAPVKPARG). EGF-like domains lie at 27–58 (NDCSSLCDLAHGCCAPDGSCRCDPGWEGLHCE), 62–89 (RMPGCQHGTCHQPWQCICHTGWAGKFCD), 91–129 (DEHICTTQSPCRNGGQCVYDGGGDYHCVCPPGFHGRDCE), and 131–172 (KAGP…ARCE). Over 27 to 306 (NDCSSLCDLA…RQEAGLGEPS (280 aa)) the chain is Extracellular. Cystine bridges form between C29–C40, C33–C46, C48–C57, C66–C71, C79–C88, C95–C107, C101–C117, C119–C128, C135–C148, C142–C160, C162–C171, C178–C189, C183–C198, C200–C209, C216–C227, C221–C236, and C238–C247. The N-linked (GlcNAc...) asparagine glycan is linked to N157. One can recognise an EGF-like 5; calcium-binding domain in the interval 174–210 (NVDDCLMRPCANGATCLDGINRFSCLCPEGFTGRFCT). The EGF-like 6; calcium-binding domain maps to 212 to 248 (NLDDCASRPCQRGARCRDRVHDFDCLCPSGYGGKTCE). A helical transmembrane segment spans residues 307–327 (LVAVVVFGAVTAALVLSTVLL). Over 328–383 (TLRAWRRGFCPPGPCCYPAPHYAPARQDQECQVSMLPTGLPLPPDLPPEPGKTTAL) the chain is Cytoplasmic. A disordered region spans residues 364 to 383 (PTGLPLPPDLPPEPGKTTAL). A compositionally biased stretch (pro residues) spans 367–377 (LPLPPDLPPEP).

It is found in the membrane. Regulates adipogenesis. In Bos taurus (Bovine), this protein is Protein delta homolog 2 (DLK2).